The primary structure comprises 322 residues: MPGNSRRRGAVRKSGTKKGAGVGSGGQRRRGLEGRGPTPPAHLRPHHPAAKRARAQPRRPVKRADETETVLGRNPVLECLRAGVPATALYVALGTEADERLTECVARAADSGIAIVELLRADLDRMTANHLHQGIALQVPPYNYAHPDDLLAAALDQPPALLVALDNLSDPRNLGAIMRSVAAFGGHGVLIPQRRSASVTAVAWRTSAGAAARIPVARATNLTRTLKGWADRGVRVIGLDAGGGTALDDVDGTDSLVVVVGSEGKGLSRLVRQNCDEVVSIPMAAQAESLNASVAAGVVLAAIARQRRRPREPREQTQNRMI.

Composition is skewed to basic residues over residues 1–16 and 43–61; these read MPGNSRRRGAVRKSGT and LRPHHPAAKRARAQPRRPV. The interval 1-69 is disordered; the sequence is MPGNSRRRGA…PVKRADETET (69 aa). Gly261, Ile281, and Leu290 together coordinate S-adenosyl-L-methionine.

Belongs to the class IV-like SAM-binding methyltransferase superfamily. RNA methyltransferase TrmH family.

This is an uncharacterized protein from Mycobacterium bovis (strain ATCC BAA-935 / AF2122/97).